The following is a 284-amino-acid chain: 2-dehydro-3-deoxyphosphooctonate aldolase (284 aa).

The protein belongs to the KdsA family.

The protein localises to the cytoplasm. It carries out the reaction D-arabinose 5-phosphate + phosphoenolpyruvate + H2O = 3-deoxy-alpha-D-manno-2-octulosonate-8-phosphate + phosphate. It functions in the pathway carbohydrate biosynthesis; 3-deoxy-D-manno-octulosonate biosynthesis; 3-deoxy-D-manno-octulosonate from D-ribulose 5-phosphate: step 2/3. It participates in bacterial outer membrane biogenesis; lipopolysaccharide biosynthesis. This Pectobacterium carotovorum subsp. carotovorum (strain PC1) protein is 2-dehydro-3-deoxyphosphooctonate aldolase.